The primary structure comprises 313 residues: Porphobilinogen deaminase (313 aa).

At C242 the chain carries S-(dipyrrolylmethanemethyl)cysteine.

Belongs to the HMBS family. As to quaternary structure, monomer. Dipyrromethane is required as a cofactor.

It catalyses the reaction 4 porphobilinogen + H2O = hydroxymethylbilane + 4 NH4(+). Its pathway is porphyrin-containing compound metabolism; protoporphyrin-IX biosynthesis; coproporphyrinogen-III from 5-aminolevulinate: step 2/4. Functionally, tetrapolymerization of the monopyrrole PBG into the hydroxymethylbilane pre-uroporphyrinogen in several discrete steps. The sequence is that of Porphobilinogen deaminase from Escherichia coli O17:K52:H18 (strain UMN026 / ExPEC).